The following is a 327-amino-acid chain: Ornithine carbamoyltransferase (327 aa).

Carbamoyl phosphate contacts are provided by residues 56–59 (STRT), Gln-83, Arg-107, and 134–137 (HPTQ). Residues Asn-166, Asp-230, and 234 to 235 (SM) each bind L-ornithine. Carbamoyl phosphate-binding positions include 269-270 (CL) and Arg-314.

It belongs to the aspartate/ornithine carbamoyltransferase superfamily. OTCase family.

It localises to the cytoplasm. The catalysed reaction is carbamoyl phosphate + L-ornithine = L-citrulline + phosphate + H(+). Its pathway is amino-acid degradation; L-arginine degradation via ADI pathway; carbamoyl phosphate from L-arginine: step 2/2. In terms of biological role, reversibly catalyzes the transfer of the carbamoyl group from carbamoyl phosphate (CP) to the N(epsilon) atom of ornithine (ORN) to produce L-citrulline. The chain is Ornithine carbamoyltransferase from Borreliella burgdorferi (strain ZS7) (Borrelia burgdorferi).